The chain runs to 189 residues: Sec-independent protein translocase protein TatB (189 aa).

A helical transmembrane segment spans residues 1–21 (MFGVGIFEVLVILIVAVIALG). The tract at residues 152–189 (TQKPQNSIDSINSKESSVDSLHSPSIVESTQSSSSKDS) is disordered. The segment covering 153–189 (QKPQNSIDSINSKESSVDSLHSPSIVESTQSSSSKDS) has biased composition (polar residues).

It belongs to the TatB family. In terms of assembly, the Tat system comprises two distinct complexes: a TatABC complex, containing multiple copies of TatA, TatB and TatC subunits, and a separate TatA complex, containing only TatA subunits. Substrates initially bind to the TatABC complex, which probably triggers association of the separate TatA complex to form the active translocon.

It localises to the cell inner membrane. Part of the twin-arginine translocation (Tat) system that transports large folded proteins containing a characteristic twin-arginine motif in their signal peptide across membranes. Together with TatC, TatB is part of a receptor directly interacting with Tat signal peptides. TatB may form an oligomeric binding site that transiently accommodates folded Tat precursor proteins before their translocation. In Helicobacter hepaticus (strain ATCC 51449 / 3B1), this protein is Sec-independent protein translocase protein TatB.